The primary structure comprises 163 residues: Bacterial ISG15-like ubiquitin-like protein BilA (163 aa).

Ubiquitin-like BIL-type domains follow at residues 4 to 80 and 81 to 163; these read LVVF…RCKR and IRAT…RIEG. A Glycyl lysine isopeptide (Gly-Lys) (interchain with K-? in central tail fiber acceptor protein) cross-link involves residue Gly163.

Component of the Bil (bacterial ISG15-like) antiviral defense system, composed of BilA, BilB, BilC and BilD. The Bil system specifically conjugates a ubiquitin-like moiety (bilA) to the bacteriophage central tail fiber (CTF, or tip attachment protein J) via reactions involving E1 (bilD) and E2 (bilB). Modifies CTF of phage SECphi27 and SECphi4, which probably interferes with assembly of the phage tail. Also modifies T5 baseplate hub protein pb3 (gene D16), but not gp27 of phage T6 (Bil defends against T6). Bil-encoding bacteria produce mostly defective phage SECphi27, many of which have phage assembly defects, including no tails. SECphi27 phage progeny produced in E.coli with the Bil system inject less DNA into naive host cells, maybe because the phage are less able to adsorb and inject their DNA into host cells. Its function is as follows. Expression of the Bil system in E.coli (strain MG1655) confers about 100-fold resistance to phage SECphi27, SECphi18, SECphi6, SECphi4 and T5, but not to SECphi17. When cells expressing the Bil system are infected by phage SECphi27 at low multiplicity of infection (0.03 MOI) the culture survives, at 3.0 MOI the culture collapses at the same time as cells without the Bil system. The protein is Bacterial ISG15-like ubiquitin-like protein BilA of Collimonas sp. (strain OK412).